The following is a 161-amino-acid chain: Large ribosomal subunit protein uL15 (161 aa).

The segment covering 1-13 (MKLNELRDNEGAA) has biased composition (basic and acidic residues). The tract at residues 1-51 (MKLNELRDNEGAARKKKRVARGPGSGKGKTAGRGIKGQKSRSGVALNGYEG) is disordered. Over residues 23–35 (PGSGKGKTAGRGI) the composition is skewed to gly residues.

Belongs to the universal ribosomal protein uL15 family. Part of the 50S ribosomal subunit.

Its function is as follows. Binds to the 23S rRNA. The protein is Large ribosomal subunit protein uL15 of Cereibacter sphaeroides (strain ATCC 17023 / DSM 158 / JCM 6121 / CCUG 31486 / LMG 2827 / NBRC 12203 / NCIMB 8253 / ATH 2.4.1.) (Rhodobacter sphaeroides).